Consider the following 79-residue polypeptide: MESLNVDMLYIAVAIMIGLAAIGAAIGIGILGSKFLEGAARQPDLVPLLRTQFFVVMGLVDAIPMIAVGLGLYMLFAIS.

The next 2 helical transmembrane spans lie at 11-31 (IAVA…IGIL) and 53-73 (FFVV…LGLY).

Belongs to the ATPase C chain family. F-type ATPases have 2 components, F(1) - the catalytic core - and F(0) - the membrane proton channel. F(1) has five subunits: alpha(3), beta(3), gamma(1), delta(1), epsilon(1). F(0) has three main subunits: a(1), b(2) and c(10-14). The alpha and beta chains form an alternating ring which encloses part of the gamma chain. F(1) is attached to F(0) by a central stalk formed by the gamma and epsilon chains, while a peripheral stalk is formed by the delta and b chains.

It localises to the cell membrane. Its function is as follows. F(1)F(0) ATP synthase produces ATP from ADP in the presence of a proton or sodium gradient. F-type ATPases consist of two structural domains, F(1) containing the extramembraneous catalytic core and F(0) containing the membrane proton channel, linked together by a central stalk and a peripheral stalk. During catalysis, ATP synthesis in the catalytic domain of F(1) is coupled via a rotary mechanism of the central stalk subunits to proton translocation. In terms of biological role, key component of the F(0) channel; it plays a direct role in translocation across the membrane. A homomeric c-ring of between 10-14 subunits forms the central stalk rotor element with the F(1) delta and epsilon subunits. In Buchnera aphidicola subsp. Schizaphis graminum (strain Sg), this protein is ATP synthase subunit c.